We begin with the raw amino-acid sequence, 506 residues long: Zinc finger protein MAGPIE (506 aa).

The tract at residues 1-53 (MTTEDQTISSSGGYVQSSSTTDHVDHHHHDQHESLNPPLVKKKRNLPGNPDPE) is disordered. Over residues 9 to 21 (SSSGGYVQSSSTT) the composition is skewed to low complexity. The span at 22-33 (DHVDHHHHDQHE) shows a compositional bias: basic and acidic residues. S60 is modified (phosphoserine). 2 consecutive C2H2-type zinc fingers follow at residues 70 to 92 (FLCE…RRGH) and 111 to 141 (YVCP…CRKH). Residues 133–140 (IKKHFCRK) carry the Nuclear localization signal motif. The C2H2-type 2; degenerate zinc finger occupies 146 to 169 (WKCEKCAKRYAVQSDWKAHSKTCG). Zn(2+) is bound by residues C148, C151, H164, C168, C175, C177, H190, and C194. The segment at 173–196 (YRCDCGTIFSRRDSFITHRAFCDA) adopts a CCHC-type 2; atypical zinc-finger fold. The tract at residues 183–195 (RRDSFITHRAFCD) is SHR-binding.

As to quaternary structure, interacts with SHR, SCR and JKD, but not with itself. Interacts with SIEL. Binds to RGA and SCL3 competitively in the nucleus. Expressed in the ground tissue and stele cells of embryos and 2-days post-germination roots but not in the quiescent center. Detected only in cells that perform asymmetric cell divisions. In roots, present in cortex, endodermis, and pericycle layer.

The protein resides in the nucleus. Its function is as follows. Transcription factor that regulates tissue boundaries and asymmetric cell division. Contributes to the sequestration of 'SHORT-ROOT' to the nucleus. Interacts with the SCR and MGP promoters. Does not show transcription activity by itself, but regulates the transcription of downstream genes through interaction with other transcription factors. Binds DNA via its zinc fingers. Recognizes and binds to SCL3 promoter sequence 5'-AGACAA-3' to promote its expression when in complex with RGA. Positively involved in gibberellic acid (GA) signaling. The polypeptide is Zinc finger protein MAGPIE (Arabidopsis thaliana (Mouse-ear cress)).